The chain runs to 125 residues: Small ribosomal subunit protein uS12 (125 aa).

Position 89 is a 3-methylthioaspartic acid (Asp-89).

The protein belongs to the universal ribosomal protein uS12 family. In terms of assembly, part of the 30S ribosomal subunit. Contacts proteins S8 and S17. May interact with IF1 in the 30S initiation complex.

Functionally, with S4 and S5 plays an important role in translational accuracy. Its function is as follows. Interacts with and stabilizes bases of the 16S rRNA that are involved in tRNA selection in the A site and with the mRNA backbone. Located at the interface of the 30S and 50S subunits, it traverses the body of the 30S subunit contacting proteins on the other side and probably holding the rRNA structure together. The combined cluster of proteins S8, S12 and S17 appears to hold together the shoulder and platform of the 30S subunit. The polypeptide is Small ribosomal subunit protein uS12 (Cupriavidus pinatubonensis (strain JMP 134 / LMG 1197) (Cupriavidus necator (strain JMP 134))).